The following is a 346-amino-acid chain: Glycerol-3-phosphate dehydrogenase [NAD(P)+] (346 aa).

Positions 15, 16, 36, and 110 each coordinate NADPH. Sn-glycerol 3-phosphate contacts are provided by Lys-110, Gly-139, and Ser-141. An NADPH-binding site is contributed by Ala-143. Sn-glycerol 3-phosphate contacts are provided by Lys-194, Asp-247, Ser-257, Arg-258, and Asn-259. Catalysis depends on Lys-194, which acts as the Proton acceptor. Arg-258 lines the NADPH pocket. 2 residues coordinate NADPH: Val-282 and Glu-284.

The protein belongs to the NAD-dependent glycerol-3-phosphate dehydrogenase family.

Its subcellular location is the cytoplasm. The enzyme catalyses sn-glycerol 3-phosphate + NAD(+) = dihydroxyacetone phosphate + NADH + H(+). It catalyses the reaction sn-glycerol 3-phosphate + NADP(+) = dihydroxyacetone phosphate + NADPH + H(+). The protein operates within membrane lipid metabolism; glycerophospholipid metabolism. In terms of biological role, catalyzes the reduction of the glycolytic intermediate dihydroxyacetone phosphate (DHAP) to sn-glycerol 3-phosphate (G3P), the key precursor for phospholipid synthesis. This Xylella fastidiosa (strain M23) protein is Glycerol-3-phosphate dehydrogenase [NAD(P)+].